Consider the following 598-residue polypeptide: 2-succinyl-5-enolpyruvyl-6-hydroxy-3-cyclohexene-1-carboxylate synthase (598 aa).

Belongs to the TPP enzyme family. MenD subfamily. As to quaternary structure, homodimer. Requires Mg(2+) as cofactor. Mn(2+) is required as a cofactor. The cofactor is thiamine diphosphate.

The catalysed reaction is isochorismate + 2-oxoglutarate + H(+) = 5-enolpyruvoyl-6-hydroxy-2-succinyl-cyclohex-3-ene-1-carboxylate + CO2. The protein operates within quinol/quinone metabolism; 1,4-dihydroxy-2-naphthoate biosynthesis; 1,4-dihydroxy-2-naphthoate from chorismate: step 2/7. It functions in the pathway cofactor biosynthesis; phylloquinone biosynthesis. Catalyzes the thiamine diphosphate-dependent decarboxylation of 2-oxoglutarate and the subsequent addition of the resulting succinic semialdehyde-thiamine pyrophosphate anion to isochorismate to yield 2-succinyl-5-enolpyruvyl-6-hydroxy-3-cyclohexene-1-carboxylate (SEPHCHC). The polypeptide is 2-succinyl-5-enolpyruvyl-6-hydroxy-3-cyclohexene-1-carboxylate synthase (Prochlorococcus marinus (strain NATL1A)).